The primary structure comprises 150 residues: Deoxyuridine 5'-triphosphate nucleotidohydrolase (150 aa).

Substrate is bound by residues 70–72 (RSG), Asn83, and 87–89 (TID).

This sequence belongs to the dUTPase family. It depends on Mg(2+) as a cofactor.

The catalysed reaction is dUTP + H2O = dUMP + diphosphate + H(+). Its pathway is pyrimidine metabolism; dUMP biosynthesis; dUMP from dCTP (dUTP route): step 2/2. This enzyme is involved in nucleotide metabolism: it produces dUMP, the immediate precursor of thymidine nucleotides and it decreases the intracellular concentration of dUTP so that uracil cannot be incorporated into DNA. This chain is Deoxyuridine 5'-triphosphate nucleotidohydrolase, found in Desulfotalea psychrophila (strain LSv54 / DSM 12343).